Reading from the N-terminus, the 362-residue chain is P2Y purinoceptor 1 (362 aa).

Residues 1–40 (MTEALISAALNGTQPELLAGGWAAGNASTKCSLTKTGFQF) are Extracellular-facing. N-linked (GlcNAc...) asparagine glycosylation is found at Asn-11 and Asn-26. Cystine bridges form between Cys-31–Cys-285 and Cys-113–Cys-191. Lys-35 provides a ligand contact to ADP. Residues 41–63 (YYLPTVYILVFITGFLGNSVAIW) form a helical membrane-spanning segment. The Cytoplasmic portion of the chain corresponds to 64 to 76 (MFVFHMRPWSGIS). Residues 77–98 (VYMFNLALADFLYVLTLPALIF) form a helical membrane-spanning segment. Residues 99–114 (YYFNKTDWIFGDVMCK) lie on the Extracellular side of the membrane. Asn-102 carries N-linked (GlcNAc...) asparagine glycosylation. The chain crosses the membrane as a helical span at residues 115 to 136 (LQRFIFHVNLYGSILFLTCISV). The Cytoplasmic segment spans residues 137 to 155 (HRYTGVVHPLKSLGRLKKK). The chain crosses the membrane as a helical span at residues 156–177 (NAVYVSSLVWALVVAVIAPILF). Over 178-203 (YSGTGVRRNKTITCYDTTADEYLRSY) the chain is Extracellular. Asn-186 carries N-linked (GlcNAc...) asparagine glycosylation. ADP is bound at residue 192-194 (YDT). A helical membrane pass occupies residues 204 to 226 (FVYSMCTTVFMFCIPFIVILGCY). At 227–249 (GLIVKALIYKDLDNSPLRRKSIY) the chain is on the cytoplasmic side. A helical transmembrane segment spans residues 250 to 273 (LVIIVLTVFAVSYLPFHVMKTLNL). ADP-binding positions include 272–276 (NLRAR), 292–295 (YATY), and Arg-299. Over 274–292 (RARLDFQTPQMCAFNDKVY) the chain is Extracellular. The helical transmembrane segment at 293 to 314 (ATYQVTRGLASLNSCVDPILYF) threads the bilayer. Residues 315–362 (LAGDTFRRRLSRATRKSSRRSEPNVQSKSEEMTLNILTEYKQNGDTSL) lie on the Cytoplasmic side of the membrane.

The protein belongs to the G-protein coupled receptor 1 family. In terms of tissue distribution, mainly found in blood, brain, and lung. To a lesser extent in stomach, gut and skeletal muscle.

The protein resides in the cell membrane. Its function is as follows. Receptor for extracellular adenine nucleotides such as ADP. In platelets, binding to ADP leads to mobilization of intracellular calcium ions via activation of phospholipase C, a change in platelet shape, and ultimately platelet aggregation. The polypeptide is P2Y purinoceptor 1 (P2RY1) (Meleagris gallopavo (Wild turkey)).